The chain runs to 78 residues: Neurogranin (78 aa).

Met-1 is modified (N-acetylmethionine). A disulfide bond links Cys-3 and Cys-51. An IQ domain is found at 26–47 (ANAAAAKIQASFRGHMARKKIK). Ser-36 is modified (phosphoserine; by PHK and PKC). Positions 39 to 78 (GHMARKKIKSGECGRKGPGPGGPGGAGGARGGAGGGPSGD) are disordered. The Collagen-like domain maps to 48–78 (SGECGRKGPGPGGPGGAGGARGGAGGGPSGD). Over residues 54–78 (KGPGPGGPGGAGGARGGAGGGPSGD) the composition is skewed to gly residues. Arg-68 bears the Citrulline; partial mark. At Arg-68 the chain carries Omega-N-methylarginine.

Belongs to the neurogranin family. Interacts with apo-calmodulin; this interaction decreases the affinity of calmodulin for calcium ions. Post-translationally, disulfide bond formation is redox-sensitive. The cysteine residues are readily oxidized by several nitric acid (NO) donors and other oxidants to form intramolecular disulfide. Cys-51 can form a disulfide with any other of the cysteine residues with an order of reactivity Cys-9 &gt; Cys-4 &gt; Cys-3. In terms of processing, phosphorylated at Ser-36 by PHK and PKC, phosphorylation prevents interaction with Calmodulin and interrupts several learning- and memory-associated functions.

It localises to the cytoplasm. It is found in the synapse. The protein resides in the cell projection. Its subcellular location is the dendritic spine. Functionally, regulates the affinity of calmodulin for calcium. Involved in synaptic plasticity and spatial learning. This chain is Neurogranin (Nrgn), found in Mus musculus (Mouse).